The primary structure comprises 472 residues: Methylenetetrahydrofolate--tRNA-(uracil-5-)-methyltransferase TrmFO (472 aa).

15-20 (GGGLAG) serves as a coordination point for FAD.

This sequence belongs to the MnmG family. TrmFO subfamily. FAD serves as cofactor.

The protein resides in the cytoplasm. It catalyses the reaction uridine(54) in tRNA + (6R)-5,10-methylene-5,6,7,8-tetrahydrofolate + NADH + H(+) = 5-methyluridine(54) in tRNA + (6S)-5,6,7,8-tetrahydrofolate + NAD(+). The catalysed reaction is uridine(54) in tRNA + (6R)-5,10-methylene-5,6,7,8-tetrahydrofolate + NADPH + H(+) = 5-methyluridine(54) in tRNA + (6S)-5,6,7,8-tetrahydrofolate + NADP(+). Its function is as follows. Catalyzes the folate-dependent formation of 5-methyl-uridine at position 54 (M-5-U54) in all tRNAs. The protein is Methylenetetrahydrofolate--tRNA-(uracil-5-)-methyltransferase TrmFO of Rhizobium meliloti (strain 1021) (Ensifer meliloti).